The primary structure comprises 250 residues: Ubiquinone biosynthesis O-methyltransferase (250 aa).

Positions 41, 72, 93, and 136 each coordinate S-adenosyl-L-methionine.

Belongs to the methyltransferase superfamily. UbiG/COQ3 family.

It catalyses the reaction a 3-demethylubiquinol + S-adenosyl-L-methionine = a ubiquinol + S-adenosyl-L-homocysteine + H(+). The catalysed reaction is a 3-(all-trans-polyprenyl)benzene-1,2-diol + S-adenosyl-L-methionine = a 2-methoxy-6-(all-trans-polyprenyl)phenol + S-adenosyl-L-homocysteine + H(+). The protein operates within cofactor biosynthesis; ubiquinone biosynthesis. In terms of biological role, O-methyltransferase that catalyzes the 2 O-methylation steps in the ubiquinone biosynthetic pathway. The chain is Ubiquinone biosynthesis O-methyltransferase from Agrobacterium fabrum (strain C58 / ATCC 33970) (Agrobacterium tumefaciens (strain C58)).